We begin with the raw amino-acid sequence, 904 residues long: Endoplasmic reticulum metallopeptidase 1 (904 aa).

At methionine 1 the chain carries N-acetylmethionine. Residues 1-63 are Cytoplasmic-facing; sequence MEWGSESAAV…PGGSGGASRG (63 aa). The segment at 1–65 is disordered; that stretch reads MEWGSESAAV…GSGGASRGAG (65 aa). Residues 55 to 65 show a composition bias toward gly residues; that stretch reads GGSGGASRGAG. Residues 64-84 form a helical membrane-spanning segment; that stretch reads AGTGLSEVRAALGLALYLIAL. Residues 85 to 399 are Lumenal-facing; that stretch reads RTLVQLSLQQ…AASKYRHGNM (315 aa). Asparagine 182 carries an N-linked (GlcNAc...) asparagine glycan. Cysteine 204 and cysteine 222 are joined by a disulfide. Zn(2+)-binding residues include histidine 205 and aspartate 217. Catalysis depends on glutamate 251, which acts as the Proton acceptor. Zn(2+) is bound by residues glutamate 252, glutamate 278, and histidine 354. Residues 400–420 traverse the membrane as a helical segment; sequence VFFDVLGLFVIAYPSRIGSII. Over 421-457 the chain is Cytoplasmic; the sequence is NYMVVMGVVLYLGKKFLQPKHKTGNYKKDFLCGLGIT. The helical transmembrane segment at 458 to 478 threads the bilayer; the sequence is LISWFTSLVTVLIIAVFISLI. Over 479–489 the chain is Lumenal; that stretch reads GQSLSWYNHFY. The chain crosses the membrane as a helical span at residues 490 to 510; it reads VSVCLYGTATVAKIILIHTLA. Over 511 to 519 the chain is Cytoplasmic; the sequence is KRFYYMNAS. A helical membrane pass occupies residues 520 to 540; it reads AQYLGEVFFDISLFVHCCFLV. A topological domain (lumenal) is located at residue threonine 541. The chain crosses the membrane as a helical span at residues 542 to 562; sequence LTYQGLCSAFISAVWVAFPLL. At 563-579 the chain is on the cytoplasmic side; that stretch reads TKLCVHKDFKQHGAQGK. A helical membrane pass occupies residues 580–600; it reads FIAFYLLGMFIPYLYALYLIW. Over 601 to 621 the chain is Lumenal; the sequence is AVFEMFTPILGRSGSEIPPDV. Residues 622-642 traverse the membrane as a helical segment; sequence VLASILAGCTMILSSYFINFI. Over 643 to 651 the chain is Cytoplasmic; sequence YLAKSTKKT. Residues 652 to 672 form a helical membrane-spanning segment; that stretch reads MLTLTLVCAITFLLVCSGTFF. Topologically, residues 673 to 904 are lumenal; sequence PYSSNPANPK…WVCTYDLFVF (232 aa). N-linked (GlcNAc...) asparagine glycosylation is present at asparagine 730.

It belongs to the peptidase M28 family. Zn(2+) is required as a cofactor.

The protein resides in the endoplasmic reticulum membrane. Within the ovary, required for the organization of somatic cells and oocytes into discrete follicular structures. This Homo sapiens (Human) protein is Endoplasmic reticulum metallopeptidase 1.